The sequence spans 180 residues: NAD(P)H-quinone oxidoreductase subunit I, chloroplastic (180 aa).

4Fe-4S ferredoxin-type domains follow at residues Gly-55–Arg-84 and Leu-95–Glu-124. Residues Cys-64, Cys-67, Cys-70, Cys-74, Cys-104, Cys-107, Cys-110, and Cys-114 each contribute to the [4Fe-4S] cluster site.

Belongs to the complex I 23 kDa subunit family. NDH is composed of at least 16 different subunits, 5 of which are encoded in the nucleus. [4Fe-4S] cluster is required as a cofactor.

Its subcellular location is the plastid. The protein localises to the chloroplast thylakoid membrane. The enzyme catalyses a plastoquinone + NADH + (n+1) H(+)(in) = a plastoquinol + NAD(+) + n H(+)(out). It carries out the reaction a plastoquinone + NADPH + (n+1) H(+)(in) = a plastoquinol + NADP(+) + n H(+)(out). NDH shuttles electrons from NAD(P)H:plastoquinone, via FMN and iron-sulfur (Fe-S) centers, to quinones in the photosynthetic chain and possibly in a chloroplast respiratory chain. The immediate electron acceptor for the enzyme in this species is believed to be plastoquinone. Couples the redox reaction to proton translocation, and thus conserves the redox energy in a proton gradient. This is NAD(P)H-quinone oxidoreductase subunit I, chloroplastic from Liriodendron tulipifera (Tuliptree).